Reading from the N-terminus, the 185-residue chain is ATP-dependent protease subunit HslV (185 aa).

Thr-12 is an active-site residue. Ser-168, Cys-171, and Thr-174 together coordinate Na(+).

This sequence belongs to the peptidase T1B family. HslV subfamily. As to quaternary structure, a double ring-shaped homohexamer of HslV is capped on each side by a ring-shaped HslU homohexamer. The assembly of the HslU/HslV complex is dependent on binding of ATP.

Its subcellular location is the cytoplasm. It catalyses the reaction ATP-dependent cleavage of peptide bonds with broad specificity.. Allosterically activated by HslU binding. Functionally, protease subunit of a proteasome-like degradation complex believed to be a general protein degrading machinery. The protein is ATP-dependent protease subunit HslV of Jannaschia sp. (strain CCS1).